The chain runs to 202 residues: Outer-membrane lipoprotein carrier protein (202 aa).

An N-terminal signal peptide occupies residues 1–18 (MNRLFLILLLIFSHEVFS).

Belongs to the LolA family. Monomer.

The protein resides in the periplasm. Participates in the translocation of lipoproteins from the inner membrane to the outer membrane. Only forms a complex with a lipoprotein if the residue after the N-terminal Cys is not an aspartate (The Asp acts as a targeting signal to indicate that the lipoprotein should stay in the inner membrane). This Legionella pneumophila (strain Lens) protein is Outer-membrane lipoprotein carrier protein.